Consider the following 315-residue polypeptide: 3-oxoacyl-[acyl-carrier-protein] reductase 3, chloroplastic (315 aa).

Residues 1–55 constitute a chloroplast transit peptide; it reads MATTVAATKLTSLKAVKKLGFREIRQVRQWTPLQSSMPHFGSRQSFATSTVVKAQ. 77 to 101 provides a ligand contact to NADP(+); that stretch reads VTGASRGIGKAIALSLGKAGCKVLV. Position 209 (S209) interacts with substrate. Y222 serves as the catalytic Proton acceptor.

This sequence belongs to the short-chain dehydrogenases/reductases (SDR) family. Homotetramer.

The protein localises to the plastid. The protein resides in the chloroplast. It catalyses the reaction a (3R)-hydroxyacyl-[ACP] + NADP(+) = a 3-oxoacyl-[ACP] + NADPH + H(+). Its pathway is lipid metabolism; fatty acid biosynthesis. This chain is 3-oxoacyl-[acyl-carrier-protein] reductase 3, chloroplastic (bkr3), found in Brassica napus (Rape).